Here is a 343-residue protein sequence, read N- to C-terminus: Fructose-1,6-bisphosphatase class 1 (343 aa).

Residues glutamate 90, aspartate 109, leucine 111, and aspartate 112 each coordinate Mg(2+). Substrate contacts are provided by residues 112 to 115 (DGSS) and asparagine 199. Glutamate 271 contributes to the Mg(2+) binding site.

Belongs to the FBPase class 1 family. In terms of assembly, homotetramer. The cofactor is Mg(2+).

It localises to the cytoplasm. The enzyme catalyses beta-D-fructose 1,6-bisphosphate + H2O = beta-D-fructose 6-phosphate + phosphate. Its pathway is carbohydrate biosynthesis; Calvin cycle. This Rhodopseudomonas palustris (strain ATCC BAA-98 / CGA009) protein is Fructose-1,6-bisphosphatase class 1.